The following is a 224-amino-acid chain: Flagellar L-ring protein (224 aa).

The signal sequence occupies residues 1-15 (MARYLLLASTLLLAA). Cys-16 carries N-palmitoyl cysteine lipidation. Cys-16 is lipidated: S-diacylglycerol cysteine.

This sequence belongs to the FlgH family. In terms of assembly, the basal body constitutes a major portion of the flagellar organelle and consists of four rings (L,P,S, and M) mounted on a central rod.

The protein resides in the cell outer membrane. The protein localises to the bacterial flagellum basal body. Assembles around the rod to form the L-ring and probably protects the motor/basal body from shearing forces during rotation. This chain is Flagellar L-ring protein, found in Shewanella sp. (strain ANA-3).